The sequence spans 332 residues: Anthranilate phosphoribosyltransferase (332 aa).

Residues G79, 82-83 (GD), S87, 89-92 (NIST), 107-115 (KHGNRSVSS), and S119 contribute to the 5-phospho-alpha-D-ribose 1-diphosphate site. Anthranilate is bound at residue G79. S91 provides a ligand contact to Mg(2+). N110 contacts anthranilate. R165 serves as a coordination point for anthranilate. Residues D223 and E224 each contribute to the Mg(2+) site.

The protein belongs to the anthranilate phosphoribosyltransferase family. Homodimer. It depends on Mg(2+) as a cofactor.

The catalysed reaction is N-(5-phospho-beta-D-ribosyl)anthranilate + diphosphate = 5-phospho-alpha-D-ribose 1-diphosphate + anthranilate. Its pathway is amino-acid biosynthesis; L-tryptophan biosynthesis; L-tryptophan from chorismate: step 2/5. Functionally, catalyzes the transfer of the phosphoribosyl group of 5-phosphorylribose-1-pyrophosphate (PRPP) to anthranilate to yield N-(5'-phosphoribosyl)-anthranilate (PRA). The chain is Anthranilate phosphoribosyltransferase from Serratia proteamaculans (strain 568).